Here is a 459-residue protein sequence, read N- to C-terminus: E3 ubiquitin-protein ligase RNF14 (459 aa).

The RWD domain occupies 10 to 129 (DELLALASIY…QFLKEETLDF (120 aa)). Residues 141–169 (SGSQPQCEPAQKHAADASGEKSKVQDLDP) form a disordered region. Over residues 150 to 169 (AQKHAADASGEKSKVQDLDP) the composition is skewed to basic and acidic residues. The tract at residues 200–441 (KAFCCGICYS…NPDSPCYNQL (242 aa)) is TRIAD supradomain. Zn(2+) is bound by residues Cys-204, Cys-207, Cys-222, His-224, Cys-227, Cys-230, Cys-249, Cys-254, Cys-293, Cys-298, Cys-313, Cys-316, Cys-321, Cys-324, His-329, Cys-334, Cys-388, and Cys-391. 2 RING-type zinc fingers span residues 204–249 (CGIC…CLNC) and 204–254 (CGIC…EPKC). Residues 273–334 (ARYDRLLLQS…RRSYHGLSHC (62 aa)) form an IBR-type zinc finger. The RING-type 2; atypical zinc-finger motif lies at 388–417 (CPCCGTNIQKAHGCNKMTCSSCQKYFCWIC). Cys-401 is an active-site residue. Zn(2+) contacts are provided by Cys-406, Cys-409, Cys-414, Cys-417, His-429, and Cys-437.

This sequence belongs to the RBR family. RNF14 subfamily.

Its subcellular location is the cytoplasm. The protein localises to the nucleus. It carries out the reaction [E2 ubiquitin-conjugating enzyme]-S-ubiquitinyl-L-cysteine + [acceptor protein]-L-lysine = [E2 ubiquitin-conjugating enzyme]-L-cysteine + [acceptor protein]-N(6)-ubiquitinyl-L-lysine.. It functions in the pathway protein modification; protein ubiquitination. E3 ubiquitin-protein ligase that plays a key role in the RNF14-RNF25 translation quality control pathway, a pathway that takes place when a ribosome has stalled during translation, and which promotes ubiquitination and degradation of translation factors on stalled ribosomes. Recruited to stalled ribosomes by the ribosome collision sensor GCN1 and mediates 'Lys-6'-linked ubiquitination of target proteins, leading to their degradation. Mediates ubiquitination of eef1a1/eEF1A and etf1/eRF1 translation factors on stalled ribosomes, leading to their degradation. Specifically required to resolve RNA-protein cross-links caused by reactive aldehydes, which trigger translation stress by stalling ribosomes: acts by catalying 'Lys-6'-linked ubiquitination of RNA-protein cross-links, leading to their removal by the ATP-dependent unfoldase VCP and subsequent degradation by the proteasome. Independently of its function in the response to stalled ribosomes, acts as a regulator of transcription in Wnt signaling via its interaction with TCF transcription factors (tcf7/tcf1, tcf7l1/tcf3 and tcf7l2/tcf4). In Danio rerio (Zebrafish), this protein is E3 ubiquitin-protein ligase RNF14.